A 942-amino-acid polypeptide reads, in one-letter code: Nuclear receptor coactivator 7 (942 aa).

Position 1 is an N-acetylmethionine (M1). The span at 1–12 (MDTKEEKKERKQ) shows a compositional bias: basic and acidic residues. Residues 1–46 (MDTKEEKKERKQSYFARLKKKKQAKQNAETASAVATRTHTGKEDNN) are disordered. Residues 4–29 (KEEKKERKQSYFARLKKKKQAKQNAE) adopt a coiled-coil conformation. The span at 25–38 (KQNAETASAVATRT) shows a compositional bias: polar residues. At S89 the chain carries Phosphoserine. A LysM domain is found at 114-157 (MEYTAGNQDTLNSIALKFNITPNKLVELNKLFTHTIVPGQVLFV). Phosphothreonine is present on T134. The tract at residues 161–188 (NSPSSTLRLSSSSPGATVSPSSSDAEYD) is disordered. A compositionally biased stretch (low complexity) spans 162-183 (SPSSTLRLSSSSPGATVSPSSS). Phosphoserine occurs at positions 179, 183, 208, 209, and 211. Residues 324–416 (KFKSINKEKR…ENFLGEDDDF (93 aa)) are disordered. Over residues 356-368 (GHTPTKPSGSSVS) the composition is skewed to polar residues. Basic and acidic residues predominate over residues 369 to 381 (EKLKKLDSSRETS). A phosphoserine mark is found at S441, S500, and S502. Residues 781–942 (ALLENMHIEQ…VQDLEVWAFD (162 aa)) enclose the TLDc domain.

It belongs to the OXR1 family. Interacts with ESR1, ESR2A, ESR2B, THRB, PPARG and RARA in a ligand-inducible manner. Interacts with the heterodimer AHR-ARNT. Highly expressed in brain. Weakly expressed in mammary gland, ovary, uterus, prostate, stomach, bladder, spinal cord and pancreas. Expressed in cancer cell line.

The protein resides in the nucleus. Its function is as follows. Enhances the transcriptional activities of several nuclear receptors. Involved in the coactivation of different nuclear receptors, such as ESR1, THRB, PPARG and RARA. The sequence is that of Nuclear receptor coactivator 7 (NCOA7) from Homo sapiens (Human).